Consider the following 381-residue polypeptide: E3 ubiquitin-protein ligase KCMF1 (381 aa).

Position 2 is an N-acetylserine (Ser-2). Ser-2 carries the phosphoserine modification. The ZZ-type zinc finger occupies 4–60; that stretch reads HEGVSCDACLKGNFRGRRYKCLICYDYDLCASCYESGATTTRHTTDHPMQCILTRVD. Zn(2+)-binding residues include Cys-9, Cys-12, Cys-24, Cys-27, Cys-33, Cys-36, His-46, and His-50. The segment at 78-101 adopts a C2H2-type zinc-finger fold; sequence FTCPYCGKMGYTETSLQEHVTSEH. The interval 154-193 is disordered; it reads MFHPGRGLGGPRARRSNMHFTSSSTGGLSSSQSSYSPSNR. A phosphoserine mark is found at Ser-169, Ser-189, and Ser-212. Low complexity predominate over residues 175–191; it reads SSSTGGLSSSQSSYSPS. A coiled-coil region spans residues 225–257; it reads SQLQQLQMQLQLERQHAQAARQQLETARNATRR. Residues 294–314 form a disordered region; that stretch reads TRLNDPKMSETERQSMESERA. The segment covering 297 to 314 has biased composition (basic and acidic residues); it reads NDPKMSETERQSMESERA. Phosphoserine is present on residues Ser-335 and Ser-336.

It belongs to the KCMF1 family. Component of the SIFI complex, composed of KCMF1, UBR4 and calmodulin (CALM1, CALM2 or CALM3). As to expression, spleen, small intestine, ovary, peripheral blood, lung, kidney and pancreas. Expressed at low levels in the thymus, prostate, testis, colon, heart, brain, placenta and liver.

Its subcellular location is the cytoplasm. The protein localises to the late endosome. The protein resides in the lysosome. It catalyses the reaction S-ubiquitinyl-[E2 ubiquitin-conjugating enzyme]-L-cysteine + [acceptor protein]-L-lysine = [E2 ubiquitin-conjugating enzyme]-L-cysteine + N(6)-ubiquitinyl-[acceptor protein]-L-lysine.. Its pathway is protein modification; protein ubiquitination. Its function is as follows. E3 ubiquitin-protein ligase which accepts ubiquitin from an E2 ubiquitin-conjugating enzyme and then transfers it to targeted substrates, promoting their degradation by the proteasome. Together with UBR4, component of the N-end rule pathway: ubiquitinates proteins bearing specific N-terminal residues that are destabilizing according to the N-end rule, leading to their degradation. Does not ubiquitinate proteins that are acetylated at the N-terminus. Together with UBR4, part of a protein quality control pathway that catalyzes ubiquitination and degradation of proteins that have been oxidized in response to reactive oxygen species (ROS): recognizes proteins with an Arg-CysO3(H) degron at the N-terminus, and mediates assembly of heterotypic 'Lys-63'-/'Lys-27'-linked branched ubiquitin chains on oxidized proteins, leading to their degradation by autophagy. Catalytic component of the SIFI complex, a multiprotein complex required to inhibit the mitochondrial stress response after a specific stress event has been resolved: ubiquitinates and degrades (1) components of the HRI-mediated signaling of the integrated stress response, such as DELE1 and EIF2AK1/HRI, as well as (2) unimported mitochondrial precursors. Within the SIFI complex, UBR4 initiates ubiquitin chain that are further elongated or branched by KCMF1. This is E3 ubiquitin-protein ligase KCMF1 from Homo sapiens (Human).